The sequence spans 458 residues: tRNA modification GTPase MnmE (458 aa).

Positions 26, 88, and 127 each coordinate (6S)-5-formyl-5,6,7,8-tetrahydrofolate. A TrmE-type G domain is found at 224 to 378 (GLSTAIIGRP…IEDRINQLFF (155 aa)). Asparagine 234 lines the K(+) pocket. GTP is bound by residues 234 to 239 (NVGKSS), 253 to 259 (TDIAGTT), and 278 to 281 (DTAG). Serine 238 contributes to the Mg(2+) binding site. K(+) is bound by residues threonine 253, isoleucine 255, and threonine 258. Residue threonine 259 coordinates Mg(2+). Lysine 458 provides a ligand contact to (6S)-5-formyl-5,6,7,8-tetrahydrofolate.

This sequence belongs to the TRAFAC class TrmE-Era-EngA-EngB-Septin-like GTPase superfamily. TrmE GTPase family. Homodimer. Heterotetramer of two MnmE and two MnmG subunits. It depends on K(+) as a cofactor.

The protein localises to the cytoplasm. Exhibits a very high intrinsic GTPase hydrolysis rate. Involved in the addition of a carboxymethylaminomethyl (cmnm) group at the wobble position (U34) of certain tRNAs, forming tRNA-cmnm(5)s(2)U34. The polypeptide is tRNA modification GTPase MnmE (Streptococcus pyogenes serotype M1).